The following is a 305-amino-acid chain: Homoserine O-acetyltransferase (305 aa).

The active-site Acyl-thioester intermediate is the C142. K163 and S192 together coordinate substrate. Catalysis depends on H235, which acts as the Proton acceptor. E237 is an active-site residue. Residue R249 coordinates substrate.

Belongs to the MetA family.

It is found in the cytoplasm. The catalysed reaction is L-homoserine + acetyl-CoA = O-acetyl-L-homoserine + CoA. Its pathway is amino-acid biosynthesis; L-methionine biosynthesis via de novo pathway; O-acetyl-L-homoserine from L-homoserine: step 1/1. Its function is as follows. Transfers an acetyl group from acetyl-CoA to L-homoserine, forming acetyl-L-homoserine. This chain is Homoserine O-acetyltransferase, found in Roseobacter denitrificans (strain ATCC 33942 / OCh 114) (Erythrobacter sp. (strain OCh 114)).